Here is a 143-residue protein sequence, read N- to C-terminus: Transcriptional regulator MraZ (143 aa).

2 consecutive SpoVT-AbrB domains span residues 6-49 and 78-121; these read TYNH…NEAE and SDET…DLKV.

It belongs to the MraZ family. Forms oligomers.

The protein localises to the cytoplasm. It is found in the nucleoid. The protein is Transcriptional regulator MraZ of Spiroplasma kunkelii.